A 65-amino-acid polypeptide reads, in one-letter code: Large ribosomal subunit protein bL35c (65 aa).

Basic residues predominate over residues 25-44 (HKASKSHLLQKKSSKQRRHL). The segment at 25-45 (HKASKSHLLQKKSSKQRRHLS) is disordered.

The protein belongs to the bacterial ribosomal protein bL35 family.

The protein resides in the plastid. It localises to the chloroplast. The protein is Large ribosomal subunit protein bL35c of Pyropia yezoensis (Susabi-nori).